A 105-amino-acid chain; its full sequence is UPF0145 protein VP1283 (105 aa).

It belongs to the UPF0145 family.

The sequence is that of UPF0145 protein VP1283 from Vibrio parahaemolyticus serotype O3:K6 (strain RIMD 2210633).